A 93-amino-acid polypeptide reads, in one-letter code: Small ribosomal subunit protein uS19 (93 aa).

It belongs to the universal ribosomal protein uS19 family.

In terms of biological role, protein S19 forms a complex with S13 that binds strongly to the 16S ribosomal RNA. The polypeptide is Small ribosomal subunit protein uS19 (Mycobacterium sp. (strain JLS)).